The chain runs to 489 residues: Glycogen synthase (489 aa).

Arginine 20 contributes to the ADP-alpha-D-glucose binding site.

It belongs to the glycosyltransferase 1 family. Bacterial/plant glycogen synthase subfamily.

It carries out the reaction [(1-&gt;4)-alpha-D-glucosyl](n) + ADP-alpha-D-glucose = [(1-&gt;4)-alpha-D-glucosyl](n+1) + ADP + H(+). It functions in the pathway glycan biosynthesis; glycogen biosynthesis. Its function is as follows. Synthesizes alpha-1,4-glucan chains using ADP-glucose. The sequence is that of Glycogen synthase from Chlorobium limicola (strain DSM 245 / NBRC 103803 / 6330).